The primary structure comprises 519 residues: MAEKPKKSQKLRARLPRGLADRGPAELAATRAMVETIRAVYERYGFEPVETPAFEFTDALGKFLPDQDRPNEGVFSFQDDDEQWISLRYDLTAPLARYVAENFDSLPKPYRSYRNGYVYRNEKPGPGRFRQFMQFDADTVGSASPAADAEMCMMAADAMEALGIPRGSYVVKVNNRKVLDGVMESIGLGGEENAGRRLTVLRAIDKLDRLGIEGVKLLLGEGRWDGGEQGKGDFTIGAQLSPETSTPILNYLDLGIRVARDRVESPNRELGIVGYLEQIVSGSETGAQGTTELAQIVRLVEAAGYDDGRIRIDPSVVRGLEYYTGPVYEVELLLDTKDEKGRPVRFGSVGGGGRYDGLVSRFRGEPVPATGFSIGVSRLQAALTLLGKLDTRPQAGPVVVTVFDRDRVADYQKMVARLRAENIRAELYLGNPKNMGNQLKYADKRNSPCVIIQGSDEKNDPDGAQIIVKDLVLGAELASLEKDREEYLQKQAEAQRKVPEADLVDEVRRILAKHSVRWS.

It belongs to the class-II aminoacyl-tRNA synthetase family. Homodimer.

Its subcellular location is the cytoplasm. It carries out the reaction tRNA(His) + L-histidine + ATP = L-histidyl-tRNA(His) + AMP + diphosphate + H(+). The protein is Histidine--tRNA ligase of Rhodopseudomonas palustris (strain BisB18).